Reading from the N-terminus, the 73-residue chain is U3-agatoxin-Ao1e (73 aa).

The signal sequence occupies residues Met1–Ala20. Positions Ile21 to Arg34 are excised as a propeptide. Disulfide bonds link Cys36/Cys52, Cys43/Cys57, Cys51/Cys67, and Cys59/Cys65. The residue at position 71 (Asn71) is an Asparagine amide.

Belongs to the neurotoxin 07 (Beta/delta-agtx) family. 03 (aga-4) subfamily. Aga sub-subfamily. Expressed by the venom gland.

Its subcellular location is the secreted. In terms of biological role, insecticidal neurotoxin that induces an irreversible spastic paralysis when injected into insects. Modifies presynaptic voltage-gated sodium channels (Nav), causing them to open at the normal resting potential of the nerve. This leads to spontaneous release of neurotransmitter and repetitive action potentials in motor neurons. This Agelena orientalis (Funnel-web spider) protein is U3-agatoxin-Ao1e.